A 269-amino-acid polypeptide reads, in one-letter code: G-protein coupled receptor homolog C3 (269 aa).

C28 and C107 are oxidised to a cystine. 5 consecutive transmembrane segments (helical) span residues 30 to 50 (IMSV…TLMS), 71 to 91 (IGIL…SPVS), 123 to 143 (LMQI…FVYC), 165 to 185 (IVLM…IVLM), and 200 to 220 (HLCL…ISLA).

This sequence belongs to the G-protein coupled receptor 1 family.

It localises to the host cell membrane. This chain is G-protein coupled receptor homolog C3, found in Sus scrofa (Pig).